Consider the following 219-residue polypeptide: Proteasome subunit beta type-9 (219 aa).

The propeptide at 1-20 (MLRAGAPTAGSFRTEEVHTG) is removed in mature form. Catalysis depends on Thr21, which acts as the Nucleophile. 2 positions are modified to N6-acetyllysine: Lys53 and Lys109.

It belongs to the peptidase T1B family. The 26S proteasome consists of a 20S proteasome core and two 19S regulatory subunits. The 20S proteasome core is composed of 28 subunits that are arranged in four stacked rings, resulting in a barrel-shaped structure. The two end rings are each formed by seven alpha subunits, and the two central rings are each formed by seven beta subunits. The catalytic chamber with the active sites is on the inside of the barrel. Component of the immunoproteasome, where it displaces the equivalent housekeeping subunit PSMB6. Component of the spermatoproteasome, a form of the proteasome specifically found in testis. In terms of processing, autocleaved. The resulting N-terminal Thr residue of the mature subunit is responsible for the nucleophile proteolytic activity.

The protein localises to the cytoplasm. The protein resides in the nucleus. The catalysed reaction is Cleavage of peptide bonds with very broad specificity.. In terms of biological role, the proteasome is a multicatalytic proteinase complex which is characterized by its ability to cleave peptides with Arg, Phe, Tyr, Leu, and Glu adjacent to the leaving group at neutral or slightly basic pH. The proteasome has an ATP-dependent proteolytic activity. This subunit is involved in antigen processing to generate class I binding peptides. The sequence is that of Proteasome subunit beta type-9 (Psmb9) from Mus spicilegus (Steppe mouse).